A 365-amino-acid polypeptide reads, in one-letter code: Aminomethyltransferase (365 aa).

This sequence belongs to the GcvT family. The glycine cleavage system is composed of four proteins: P, T, L and H.

It catalyses the reaction N(6)-[(R)-S(8)-aminomethyldihydrolipoyl]-L-lysyl-[protein] + (6S)-5,6,7,8-tetrahydrofolate = N(6)-[(R)-dihydrolipoyl]-L-lysyl-[protein] + (6R)-5,10-methylene-5,6,7,8-tetrahydrofolate + NH4(+). The glycine cleavage system catalyzes the degradation of glycine. This chain is Aminomethyltransferase, found in Yersinia pseudotuberculosis serotype O:1b (strain IP 31758).